A 355-amino-acid chain; its full sequence is Chorismate synthase (355 aa).

NADP(+)-binding residues include Arg-44 and Arg-49. FMN contacts are provided by residues His-121–Ser-123, Gly-277, Lys-292–Ser-296, and Arg-319.

It belongs to the chorismate synthase family. It depends on FMNH2 as a cofactor.

It catalyses the reaction 5-O-(1-carboxyvinyl)-3-phosphoshikimate = chorismate + phosphate. The protein operates within metabolic intermediate biosynthesis; chorismate biosynthesis; chorismate from D-erythrose 4-phosphate and phosphoenolpyruvate: step 7/7. Its function is as follows. Catalyzes the anti-1,4-elimination of the C-3 phosphate and the C-6 proR hydrogen from 5-enolpyruvylshikimate-3-phosphate (EPSP) to yield chorismate, which is the branch point compound that serves as the starting substrate for the three terminal pathways of aromatic amino acid biosynthesis. This reaction introduces a second double bond into the aromatic ring system. This Thermococcus kodakarensis (strain ATCC BAA-918 / JCM 12380 / KOD1) (Pyrococcus kodakaraensis (strain KOD1)) protein is Chorismate synthase.